The following is a 131-amino-acid chain: Phosphoribosyl-AMP cyclohydrolase (131 aa).

Position 78 (D78) interacts with Mg(2+). C79 is a Zn(2+) binding site. Residues D80 and D82 each coordinate Mg(2+). Zn(2+)-binding residues include C96 and C103.

Belongs to the PRA-CH family. Homodimer. Mg(2+) is required as a cofactor. The cofactor is Zn(2+).

The protein localises to the cytoplasm. The enzyme catalyses 1-(5-phospho-beta-D-ribosyl)-5'-AMP + H2O = 1-(5-phospho-beta-D-ribosyl)-5-[(5-phospho-beta-D-ribosylamino)methylideneamino]imidazole-4-carboxamide. It participates in amino-acid biosynthesis; L-histidine biosynthesis; L-histidine from 5-phospho-alpha-D-ribose 1-diphosphate: step 3/9. Catalyzes the hydrolysis of the adenine ring of phosphoribosyl-AMP. The protein is Phosphoribosyl-AMP cyclohydrolase of Neisseria gonorrhoeae (strain ATCC 700825 / FA 1090).